A 232-amino-acid polypeptide reads, in one-letter code: MENQPKLNSSKEVIAFLAERFPHCFSAEGEARPLKIGIFQDLVDRVAGEMNLSKTQLRSALRLYTSSWRYLYGVKPGATRVDLDGNPCGELDEQHVEHARKQLEEAKARVQAQRAEQQAKKREAAAAAGEKEDAPRRERKPRPTTPRRKEGAERKPRAQKPVEKAPKTVKAPREEQHTPVSDISALTVGQALKVKAGQNAMDATVLEITKDGVRVQLNSGMSLIVRAEHLVF.

The segment at 105 to 182 (EAKARVQAQR…REEQHTPVSD (78 aa)) is disordered. Positions 117–136 (QQAKKREAAAAAGEKEDAPR) are enriched in basic and acidic residues. A compositionally biased stretch (basic residues) spans 137 to 146 (RERKPRPTTP). The segment covering 147-177 (RRKEGAERKPRAQKPVEKAPKTVKAPREEQH) has biased composition (basic and acidic residues).

This sequence belongs to the ProQ family.

It localises to the cytoplasm. Functionally, RNA chaperone with significant RNA binding, RNA strand exchange and RNA duplexing activities. May regulate ProP activity through an RNA-based, post-transcriptional mechanism. The chain is RNA chaperone ProQ from Escherichia coli (strain ATCC 8739 / DSM 1576 / NBRC 3972 / NCIMB 8545 / WDCM 00012 / Crooks).